A 106-amino-acid chain; its full sequence is Large ribosomal subunit protein uL22 (106 aa).

This sequence belongs to the universal ribosomal protein uL22 family. As to quaternary structure, part of the 50S ribosomal subunit.

In terms of biological role, this protein binds specifically to 23S rRNA; its binding is stimulated by other ribosomal proteins, e.g. L4, L17, and L20. It is important during the early stages of 50S assembly. It makes multiple contacts with different domains of the 23S rRNA in the assembled 50S subunit and ribosome. Functionally, the globular domain of the protein is located near the polypeptide exit tunnel on the outside of the subunit, while an extended beta-hairpin is found that lines the wall of the exit tunnel in the center of the 70S ribosome. The chain is Large ribosomal subunit protein uL22 from Nautilia profundicola (strain ATCC BAA-1463 / DSM 18972 / AmH).